The sequence spans 425 residues: RNA polymerase II-associated factor 1 homolog (425 aa).

Residues K152–T174 are a coiled coil. Residues S331–D425 are disordered. 2 stretches are compositionally biased toward basic and acidic residues: residues S344 to G380 and D393 to S402.

It belongs to the PAF1 family. In terms of assembly, component of the PAF1 complex which consists of at least cdc-73, ctr-9, leo-1, pafo-1 and rtfo-1.

Its subcellular location is the nucleus. In terms of biological role, component of the PAF1 complex which is a multifunctional complex involved in transcription initiation via genetic interactions with TATA-binding proteins, elongation and transcription-coupled histone modification. The protein is RNA polymerase II-associated factor 1 homolog of Caenorhabditis elegans.